The following is a 320-amino-acid chain: 3-ketodihydrosphingosine reductase TSC10 (320 aa).

Over 1-254 (MKFTLEDQVV…IIAKSLARGD (254 aa)) the chain is Cytoplasmic. Residue Leu11 coordinates NADP(+). 3 residues coordinate NADPH: Gly14, Ser16, and Gly18. Residues 14-18 (GGSQG) carry the GXSXG motif. Leu19 lines the NADP(+) pocket. Residues Arg41, Arg45, Asp89, and Leu90 each contribute to the NADPH site. Asp89 is an NADP(+) binding site. The Proton donor role is filled by Ser166. Residues Tyr180, Lys184, and Ser213 each coordinate NADP(+). Tyr180 (proton acceptor) is an active-site residue. Lys184 serves as the catalytic Lowers pKa of active site Tyr. Residues 255–275 (DDVFTDFVGWMIMGMDLGLTA) traverse the membrane as a helical segment. At 276–279 (KKSR) the chain is on the lumenal side. A helical membrane pass occupies residues 280-300 (FVPLQWIFGVLSNILVVPFYM). Residues 301 to 320 (VGCSWYIRKWFRENDGKKAN) are Cytoplasmic-facing.

It belongs to the short-chain dehydrogenases/reductases (SDR) family. In terms of assembly, dimer or tetramer.

It localises to the endoplasmic reticulum membrane. It catalyses the reaction sphinganine + NADP(+) = 3-oxosphinganine + NADPH + H(+). Its pathway is lipid metabolism; sphingolipid metabolism. Its function is as follows. Catalyzes the reduction of 3'-oxosphinganine (3-ketodihydrosphingosine/KDS) to sphinganine (dihydrosphingosine/DHS), the second step of de novo sphingolipid biosynthesis. The chain is 3-ketodihydrosphingosine reductase TSC10 from Saccharomyces cerevisiae (strain ATCC 204508 / S288c) (Baker's yeast).